We begin with the raw amino-acid sequence, 123 residues long: UPF0102 protein mma_0204 (123 aa).

This sequence belongs to the UPF0102 family.

This chain is UPF0102 protein mma_0204, found in Janthinobacterium sp. (strain Marseille) (Minibacterium massiliensis).